Consider the following 387-residue polypeptide: V-set and immunoglobulin domain-containing protein 1 (387 aa).

The first 21 residues, 1 to 21 (MVFAFWKVFLILSCLAGQVSV), serve as a signal peptide directing secretion. The 111-residue stretch at 22–132 (VQVTIPDGFV…DFLGQNQGIL (111 aa)) folds into the Ig-like V-type domain. Residues 22–232 (VQVTIPDGFV…EIDLTSSHPE (211 aa)) are Extracellular-facing. 2 N-linked (GlcNAc...) asparagine glycosylation sites follow: N32 and N38. C43 and C116 are joined by a disulfide. N-linked (GlcNAc...) asparagine glycosylation is found at N133, N200, and N219. Positions 140-227 (PSKPLCSVQG…GNSSCEIDLT (88 aa)) constitute an Ig-like C2-type domain. C161 and C211 are oxidised to a cystine. The chain crosses the membrane as a helical span at residues 233 to 253 (VGIIVGALIGSLVGAAIIISV). At 254 to 387 (VCFARNKAKA…SEDEKGVVKA (134 aa)) the chain is on the cytoplasmic side. Positions 266–387 (KERNSKTIAE…SEDEKGVVKA (122 aa)) are disordered. Over residues 284-296 (PRGESEAMPREDA) the composition is skewed to basic and acidic residues. The segment covering 299 to 308 (LEVTLPSSIH) has biased composition (polar residues). Residues 325–335 (TQEPAPEPAPG) show a composition bias toward pro residues. The segment covering 344–368 (LDIELELEPETQSELEPEPEPEPES) has biased composition (acidic residues).

Post-translationally, highly N-glycosylated. Appears not to contain significant amounts of O-linked carbohydrates or sialic acid in its sugar moieties. As to expression, detected only in stomach mucosa and testis, and to a much lesser level in pancreas (at protein level). Detected in gastric cancers (31%), esophageal carcinomas (50%) and ovarian cancers (23%).

It is found in the membrane. This is V-set and immunoglobulin domain-containing protein 1 (VSIG1) from Homo sapiens (Human).